Reading from the N-terminus, the 275-residue chain is Lectin 8 (275 aa).

A signal peptide spans 1 to 31 (MANSNPKLLVTQNPFSVFLLTFLLLITNVKS). N-linked (GlcNAc...) asparagine glycosylation is found at N55 and N150.

Belongs to the leguminous lectin family.

Functionally, may be involved in arbuscular mycorrhizal (AM) symbiosis with AM fungi. In Medicago truncatula (Barrel medic), this protein is Lectin 8.